The following is a 195-amino-acid chain: Protein GrpE (195 aa).

The protein belongs to the GrpE family. As to quaternary structure, homodimer.

It is found in the cytoplasm. Functionally, participates actively in the response to hyperosmotic and heat shock by preventing the aggregation of stress-denatured proteins, in association with DnaK and GrpE. It is the nucleotide exchange factor for DnaK and may function as a thermosensor. Unfolded proteins bind initially to DnaJ; upon interaction with the DnaJ-bound protein, DnaK hydrolyzes its bound ATP, resulting in the formation of a stable complex. GrpE releases ADP from DnaK; ATP binding to DnaK triggers the release of the substrate protein, thus completing the reaction cycle. Several rounds of ATP-dependent interactions between DnaJ, DnaK and GrpE are required for fully efficient folding. This is Protein GrpE from Francisella tularensis subsp. novicida (strain U112).